The chain runs to 85 residues: Small ribosomal subunit protein bS20 (85 aa).

It belongs to the bacterial ribosomal protein bS20 family.

Functionally, binds directly to 16S ribosomal RNA. The sequence is that of Small ribosomal subunit protein bS20 from Cytophaga hutchinsonii (strain ATCC 33406 / DSM 1761 / CIP 103989 / NBRC 15051 / NCIMB 9469 / D465).